The sequence spans 2360 residues: Protein Ycf2 (2360 aa).

3 disordered regions span residues 172–193 (SSQLKGSSDQSRDHFDSIGTED), 225–255 (TEIESDRFSKGLSGSSSKSRLFTEGEKEMNN), and 944–995 (KRKK…KRKE). Low complexity predominate over residues 234 to 244 (KGLSGSSSKSR). Residues 245 to 254 (LFTEGEKEMN) are compositionally biased toward basic and acidic residues. The span at 944–959 (KRKKKKPEKRKKKKPE) shows a compositional bias: basic residues. The span at 960 to 993 (KRKEKKPEKRKEKKPEKRKEKKPEKRKEKKPEKR) shows a compositional bias: basic and acidic residues. 1425–1432 (GSIGSGRS) provides a ligand contact to ATP. Disordered stretches follow at residues 1499 to 1518 (YEDRDSDDYEPGASDDYEPG), 1843 to 2031 (LVGS…LLRP), and 2098 to 2214 (PAEE…DGFS). Acidic residues predominate over residues 1849-2011 (TEEEVEGTEE…VEGTEDEEVE (163 aa)). A compositionally biased stretch (basic and acidic residues) spans 2012–2024 (GTEKDSSQFDNDR). 2 stretches are compositionally biased toward acidic residues: residues 2098–2115 (PAEEIPEEEDPLPEEALE) and 2122–2197 (GEEE…ENDS).

The protein belongs to the Ycf2 family.

It is found in the plastid. It localises to the chloroplast stroma. Probable ATPase of unknown function. Its presence in a non-photosynthetic plant (Epifagus virginiana) and experiments in tobacco indicate that it has an essential function which is probably not related to photosynthesis. The chain is Protein Ycf2 from Oenothera argillicola (Appalachian evening primrose).